A 219-amino-acid polypeptide reads, in one-letter code: Peptide methionine sulfoxide reductase MsrA (219 aa).

Cys-58 is an active-site residue.

The protein belongs to the MsrA Met sulfoxide reductase family.

It catalyses the reaction L-methionyl-[protein] + [thioredoxin]-disulfide + H2O = L-methionyl-(S)-S-oxide-[protein] + [thioredoxin]-dithiol. It carries out the reaction [thioredoxin]-disulfide + L-methionine + H2O = L-methionine (S)-S-oxide + [thioredoxin]-dithiol. Has an important function as a repair enzyme for proteins that have been inactivated by oxidation. Catalyzes the reversible oxidation-reduction of methionine sulfoxide in proteins to methionine. In Ectopseudomonas mendocina (strain ymp) (Pseudomonas mendocina), this protein is Peptide methionine sulfoxide reductase MsrA.